The following is a 501-amino-acid chain: Probable leucine aminopeptidase 2 (501 aa).

An N-terminal signal peptide occupies residues 1–18 (MVTMKLLYLTSFASLAVA). The region spanning 119–216 (SPSVNATAPL…ADGQALIQMI (98 aa)) is the PA domain. N-linked (GlcNAc...) asparagine glycans are attached at residues Asn-123 and Asn-233. Positions 257 and 269 each coordinate Zn(2+). Glu-301 functions as the Proton acceptor in the catalytic mechanism. Glu-302 serves as a coordination point for Zn(2+). A glycan (N-linked (GlcNAc...) asparagine) is linked at Asn-316. Asp-330 is a Zn(2+) binding site. Asn-350 is a glycosylation site (N-linked (GlcNAc...) asparagine). His-428 provides a ligand contact to Zn(2+). 2 N-linked (GlcNAc...) asparagine glycosylation sites follow: Asn-433 and Asn-467. The disordered stretch occupies residues 480-501 (AMKRTPHTHTGGTGCYKDRVEQ).

The protein belongs to the peptidase M28 family. M28A subfamily. Monomer. Requires Zn(2+) as cofactor.

The protein resides in the secreted. Functionally, extracellular aminopeptidase that releases a wide variety of amino acids from natural peptides and contributes to pathogenicity. This Aspergillus fumigatus (strain ATCC MYA-4609 / CBS 101355 / FGSC A1100 / Af293) (Neosartorya fumigata) protein is Probable leucine aminopeptidase 2 (lap2).